The sequence spans 615 residues: Chromosomal replication initiator protein DnaA (615 aa).

The interval 1 to 88 is domain I, interacts with DnaA modulators; the sequence is MSEGQINLAM…RVAVTVDPSA (88 aa). A disordered region spans residues 85–272; it reads DPSAVPPSAP…PTSGGPDQLN (188 aa). The segment at 88-269 is domain II; it reads AVPPSAPTEE…STNPTSGGPD (182 aa). Low complexity-rich tracts occupy residues 94–112 and 173–190; these read PTEE…PAPD and PSSA…VAES. Residues 270 to 486 form a domain III, AAA+ region region; that stretch reads QLNPKYTFDT…GALIRVTAFA (217 aa). Residues Gly314, Gly316, Lys317, and Thr318 each contribute to the ATP site. Residues 487-615 form a domain IV, binds dsDNA region; that stretch reads SLNRQSVDLH…QQAHHNHHHL (129 aa).

It belongs to the DnaA family. In terms of assembly, oligomerizes as a right-handed, spiral filament on DNA at oriC.

Its subcellular location is the cytoplasm. Plays an essential role in the initiation and regulation of chromosomal replication. ATP-DnaA binds to the origin of replication (oriC) to initiate formation of the DNA replication initiation complex once per cell cycle. Binds the DnaA box (a 9 base pair repeat at the origin) and separates the double-stranded (ds)DNA. Forms a right-handed helical filament on oriC DNA; dsDNA binds to the exterior of the filament while single-stranded (ss)DNA is stabiized in the filament's interior. The ATP-DnaA-oriC complex binds and stabilizes one strand of the AT-rich DNA unwinding element (DUE), permitting loading of DNA polymerase. After initiation quickly degrades to an ADP-DnaA complex that is not apt for DNA replication. Binds acidic phospholipids. The polypeptide is Chromosomal replication initiator protein DnaA (Thermobifida fusca (strain YX)).